A 338-amino-acid polypeptide reads, in one-letter code: MO25-like protein 2 (338 aa).

It belongs to the Mo25 family.

Its subcellular location is the cytoplasm. The protein resides in the cytoskeleton. It localises to the spindle pole. Regulates asymmetric cell division in Q.p neuroblast lineage. Plays a role in cell shedding during embryogenesis. The protein is MO25-like protein 2 (mop-25.2) of Caenorhabditis elegans.